The following is a 232-amino-acid chain: Protein TIFY 10c (232 aa).

The interval 54–73 (PPAAGAGGAFRPPPTTMNLL) is disordered. In terms of domain architecture, Tify spans 114-149 (AGEKAQQLTIFYGGKVVVFENFPSTKVKDLLQIVST). The segment at 152–177 (GVDKNTGTAATQSLPRPAHNSLPDLP) is disordered. Over residues 156 to 165 (NTGTAATQSL) the composition is skewed to polar residues. A Jas motif is present at residues 177–202 (PIARRNSLHRFLEKRKGRMNANAPYQ). The Nuclear localization signal signature appears at 179–186 (ARRNSLHR).

This sequence belongs to the TIFY/JAZ family. In terms of assembly, interacts with BHLH148. Interacts with COI1B in a coronatine-dependent manner. Coronatine is an analog of jasmonoyl isoleucine (JA-Ile). Interacts with TIFY5/JAZ2, TIFY6B/JAZ4, TIFY9/JAZ5, TIFY11A, TIFY11D/JAZ12, TIFY11G/JAZ15 and NINJA1. Ubiquitinated. Increase in jasmonoyl isoleucine (JA-Ile) levels mediates its degradation via COI1B-mediated proteasome pathway.

Its subcellular location is the nucleus. The protein localises to the cytoplasm. It localises to the cytosol. Repressor of jasmonate (JA) responses. Acts as a repressor of JA-induced resistance to the bacterial blight pathogen Xanthomonas oryzae pv. oryzae (Xoo). Regulates JA-induced accumulation of linalool at the transcriptional level of linalool synthase gene LIS. Linalool is important for resistance to bacterial blight pathogen Xoo. This Oryza sativa subsp. japonica (Rice) protein is Protein TIFY 10c.